The sequence spans 271 residues: Tryptophan synthase alpha chain (271 aa).

Residues Glu-49 and Asp-60 each act as proton acceptor in the active site.

It belongs to the TrpA family. As to quaternary structure, tetramer of two alpha and two beta chains.

The catalysed reaction is (1S,2R)-1-C-(indol-3-yl)glycerol 3-phosphate + L-serine = D-glyceraldehyde 3-phosphate + L-tryptophan + H2O. It functions in the pathway amino-acid biosynthesis; L-tryptophan biosynthesis; L-tryptophan from chorismate: step 5/5. The alpha subunit is responsible for the aldol cleavage of indoleglycerol phosphate to indole and glyceraldehyde 3-phosphate. The chain is Tryptophan synthase alpha chain from Paraburkholderia phymatum (strain DSM 17167 / CIP 108236 / LMG 21445 / STM815) (Burkholderia phymatum).